Reading from the N-terminus, the 192-residue chain is Protein LZIC (192 aa).

The stretch at 6–65 (KTETNKLKVNIEEQLNRLLAQLQDIEELKEDITQEEYDETKKDTLEQMKEFEQSLKKMMS) forms a coiled coil.

This sequence belongs to the CTNNBIP1 family.

The sequence is that of Protein LZIC (lzic) from Dictyostelium discoideum (Social amoeba).